A 312-amino-acid chain; its full sequence is Taste receptor type 2 member 9 (312 aa).

Residues 1 to 9 (MPSAIEAIY) lie on the Extracellular side of the membrane. Residues 10 to 32 (IILIAGELTIGIWGNGFIVLVNC) traverse the membrane as a helical segment. Residues 33–52 (IDWLKRRDVSLIDIILISLA) are Cytoplasmic-facing. The helical transmembrane segment at 53–72 (ISRICLLXVISLDGFFMLLF) threads the bilayer. Over 73–86 (PTTYGNSVLVSIVB) the chain is Extracellular. A helical transmembrane segment spans residues 87–109 (IVWTFANNSSLWFTSCLSIFYLL). The Cytoplasmic segment spans residues 110 to 128 (KIANISHPFFFWLKLKINK). A helical membrane pass occupies residues 129 to 146 (VILAILLGSFLISLVISV). The Extracellular portion of the chain corresponds to 147–180 (XMNDDMWYHLFKVSHEENITWEFKVSKIPGTFKQ). An N-linked (GlcNAc...) asparagine glycan is attached at Asn164. Residues 181–203 (LTLNLGAMVPFILCLISFSLLLF) traverse the membrane as a helical segment. At 204 to 234 (SLVRHTKQIQLXATGFRDPSTEAHMRAIKAV) the chain is on the cytoplasmic side. Residues 235 to 257 (IIFLLLLIVYYPVFLVMTSSALI) traverse the membrane as a helical segment. Over 258 to 261 (PQGK) the chain is Extracellular. The chain crosses the membrane as a helical span at residues 262–284 (LVLMIGDIVTITFPSSHSFILIM). Residues 285–312 (GNSKLREAFLKMLRFVKRFLRRRKPFVP) lie on the Cytoplasmic side of the membrane.

This sequence belongs to the G-protein coupled receptor T2R family.

The protein localises to the membrane. Functionally, gustducin-coupled receptor implicated in the perception of bitter compounds in the oral cavity and the gastrointestinal tract. Signals through PLCB2 and the calcium-regulated cation channel TRPM5. This Pongo pygmaeus (Bornean orangutan) protein is Taste receptor type 2 member 9 (TAS2R9).